Consider the following 293-residue polypeptide: AA9 family lytic polysaccharide monooxygenase E (293 aa).

Positions Met-1–Ala-19 are cleaved as a signal peptide. Residues His-20 and His-90 each coordinate Cu(2+). A disulfide bridge links Cys-59 with Cys-172. O2-binding residues include His-158 and Gln-167. Residue Tyr-169 participates in Cu(2+) binding. A CBM1 domain is found at Cys-257–Val-293.

The protein belongs to the polysaccharide monooxygenase AA9 family. It depends on Cu(2+) as a cofactor.

The protein localises to the secreted. The catalysed reaction is [(1-&gt;4)-beta-D-glucosyl]n+m + reduced acceptor + O2 = 4-dehydro-beta-D-glucosyl-[(1-&gt;4)-beta-D-glucosyl]n-1 + [(1-&gt;4)-beta-D-glucosyl]m + acceptor + H2O.. Glucose dehydrogenase and aryl-alcohol quinone oxidoreductases regulate the oxidative degradation of cellulose since they can act as catalytically efficient electron donors for LPMO9E. Lytic polysaccharide monooxygenase (LPMO) that depolymerizes crystalline and amorphous polysaccharides via the oxidation of scissile alpha- or beta-(1-4)-glycosidic bonds, yielding only C1 oxidation products. Catalysis by LPMOs requires the reduction of the active-site copper from Cu(II) to Cu(I) by a reducing agent and H(2)O(2) or O(2) as a cosubstrate. Improves the progression of lytic enzymes in delignified miscanthus cell walls. This boosting effect dependents on the cellular type which indicates contrasted recalcitrance levels in plant tissues. This is AA9 family lytic polysaccharide monooxygenase E from Podospora anserina (strain S / ATCC MYA-4624 / DSM 980 / FGSC 10383) (Pleurage anserina).